The primary structure comprises 226 residues: TPD1 protein homolog 1A (226 aa).

A signal peptide spans 1–35 (MRVSSASSTPPPPAFAAAAWAVVLLAMLRSDVALA).

As to quaternary structure, interacts with MSP1. As to expression, expressed in roots, and anthers and ovules during meiosis.

Functionally, involved in cell specification during anther development. Required for the differentiation of primary parietal cells into secondary parietal cells in anthers. May serve as an extracellular ligand for the MSP1 receptor kinase to limit sporocyte number in ovules. The protein is TPD1 protein homolog 1A of Oryza sativa subsp. japonica (Rice).